Reading from the N-terminus, the 520-residue chain is GMP synthase [glutamine-hydrolyzing] (520 aa).

Residues 9–202 (SVLIVDFGSQ…IHNIAGIKGD (194 aa)) enclose the Glutamine amidotransferase type-1 domain. Residue Cys86 is the Nucleophile of the active site. Catalysis depends on residues His176 and Glu178. The GMPS ATP-PPase domain maps to 203–395 (WSMSAYRQKA…LGLPDSFIGR (193 aa)). 230 to 236 (SGGVDSS) serves as a coordination point for ATP.

In terms of assembly, homodimer.

The catalysed reaction is XMP + L-glutamine + ATP + H2O = GMP + L-glutamate + AMP + diphosphate + 2 H(+). Its pathway is purine metabolism; GMP biosynthesis; GMP from XMP (L-Gln route): step 1/1. Catalyzes the synthesis of GMP from XMP. In Rhizobium johnstonii (strain DSM 114642 / LMG 32736 / 3841) (Rhizobium leguminosarum bv. viciae), this protein is GMP synthase [glutamine-hydrolyzing].